The primary structure comprises 379 residues: Beta sliding clamp (379 aa).

Belongs to the beta sliding clamp family. In terms of assembly, forms a ring-shaped head-to-tail homodimer around DNA which binds and tethers DNA polymerases and other proteins to the DNA. The DNA replisome complex has a single clamp-loading complex (3 tau and 1 each of delta, delta', psi and chi subunits) which binds 3 Pol III cores (1 core on the leading strand and 2 on the lagging strand) each with a beta sliding clamp dimer. Additional proteins in the replisome are other copies of gamma, psi and chi, Ssb, DNA helicase and RNA primase.

Its subcellular location is the cytoplasm. Its function is as follows. Confers DNA tethering and processivity to DNA polymerases and other proteins. Acts as a clamp, forming a ring around DNA (a reaction catalyzed by the clamp-loading complex) which diffuses in an ATP-independent manner freely and bidirectionally along dsDNA. Initially characterized for its ability to contact the catalytic subunit of DNA polymerase III (Pol III), a complex, multichain enzyme responsible for most of the replicative synthesis in bacteria; Pol III exhibits 3'-5' exonuclease proofreading activity. The beta chain is required for initiation of replication as well as for processivity of DNA replication. This Rickettsia felis (strain ATCC VR-1525 / URRWXCal2) (Rickettsia azadi) protein is Beta sliding clamp (dnaN).